The primary structure comprises 56 residues: Large ribosomal subunit protein bL32 (56 aa).

Positions 1–36 (MAVQQNKKSRSKRGMRRSHDALSTAQLSVDATSGEV) are disordered. Residues 7 to 16 (KKSRSKRGMR) show a composition bias toward basic residues. Residues 21–31 (ALSTAQLSVDA) are compositionally biased toward polar residues.

It belongs to the bacterial ribosomal protein bL32 family.

This is Large ribosomal subunit protein bL32 from Shewanella oneidensis (strain ATCC 700550 / JCM 31522 / CIP 106686 / LMG 19005 / NCIMB 14063 / MR-1).